The following is a 547-amino-acid chain: MATKLIKHGSKAREQMLEGIDILADAVKVTLGPKGRNVLIEQSFGSPKITKDGVTVAKSIALKDKIRNAGAQLLKSAATKAAEVAGDGTTTATVLARALAREGNKLVAAGYNPMDLKRGMDLAVNAVVEEIKKSSKKINSQEEIAQVGTISSNGDKEIGEKIAKAMEEVGKEGVITVEEAKNFSFDVEVVKGMMFDRGYLSPYFVTNSEKMVAELENPFILLFEKKLSNLQPMLPILEAVVQSQRPLLIIAEDVEGEALATLVVNRLRGGLKVAAVKAPGFGDRRKAMMEDIAILTKGELITEDLGMKLENVSIKSLGTAKRVTISKENTVIVDGNGDKKNIEDRVLQIKSQIAETTSDYDKEKLQERLAKLSGGVAVLKVGGATEVEVKERKDRVEDALAATRAAVEEGVVAGGGVTLLHASQPLTKLKVENKDQQAGIEIVIEALKDPLKQIVENAGENGGVVVGKLLEHKDKNYGFNAQDMQYVDMIKAGIIDPAKVVRTALQDAASVASLIITTETLIVDESSDKEEPMPMRGGMGGMGGMDF.

ATP is bound by residues 30–33 (TLGP), lysine 51, 87–91 (DGTTT), glycine 415, and aspartate 496. The interval 527-547 (SDKEEPMPMRGGMGGMGGMDF) is disordered. Positions 537–547 (GGMGGMGGMDF) are enriched in gly residues.

This sequence belongs to the chaperonin (HSP60) family. Forms a cylinder of 14 subunits composed of two heptameric rings stacked back-to-back. Interacts with the co-chaperonin GroES.

The protein resides in the cytoplasm. The enzyme catalyses ATP + H2O + a folded polypeptide = ADP + phosphate + an unfolded polypeptide.. Functionally, together with its co-chaperonin GroES, plays an essential role in assisting protein folding. The GroEL-GroES system forms a nano-cage that allows encapsulation of the non-native substrate proteins and provides a physical environment optimized to promote and accelerate protein folding. The chain is Chaperonin GroEL from Rickettsia massiliae (strain Mtu5).